The primary structure comprises 917 residues: Hexokinase-1 (917 aa).

At M1 the chain carries N-acetylmethionine. The tract at residues 1–10 (MIAAQLLAYY) is mitochondrial-binding peptide (MBP). Hexokinase domains are found at residues 16 to 458 (DDQV…MVTA) and 464 to 906 (AEQH…LITA). Residues R30 and 84–89 (DLGGSS) each bind ATP. A hexokinase small subdomain 1 region spans residues 73–207 (DGSEKGDFIA…DYDANIVAVV (135 aa)). 84 to 91 (DLGGSSFR) is a D-glucose 6-phosphate binding site. D-glucose is bound by residues S155, 172–173 (TK), and 208–209 (ND). A hexokinase large subdomain 1 region spans residues 208–447 (NDTVGTMMTC…SDVRFLLSES (240 aa)). The D-glucose 6-phosphate site is built by D209 and T232. D-glucose is bound by residues N235, E260, and 291 to 294 (QLFE). At S337 the chain carries Phosphoserine. An ATP-binding site is contributed by N345. 413 to 415 (DGS) lines the D-glucose 6-phosphate pocket. 425–426 (RR) contacts ATP. D-glucose 6-phosphate contacts are provided by residues S449 and 532–536 (DLGGT). Residues 521 to 655 (DGTENGDFLA…EFDLDVVAVV (135 aa)) form a hexokinase small subdomain 2 region. Residue 532 to 537 (DLGGTN) participates in ATP binding. D-glucose-binding positions include 603-604 (SF), 620-621 (TK), and 656-657 (ND). A hexokinase large subdomain 2 region spans residues 656-895 (NDTVGTMMTC…CNVSFLLSED (240 aa)). D657 and T680 together coordinate D-glucose 6-phosphate. An ATP-binding site is contributed by T680. D-glucose-binding positions include 682 to 683 (SN), E708, and E742. ATP-binding positions include 747–748 (GM), 784–788 (TKFLS), and 863–867 (TLYKL). Residues 861 to 863 (DGT) and S897 contribute to the D-glucose 6-phosphate site.

This sequence belongs to the hexokinase family. In terms of assembly, monomer. Interacts with RABL2/RABL2A; binds preferentially to GTP-bound RABL2. Interacts with VDAC1. The HK1-VDAC1 complex interacts with ATF2. Interacts (via N-terminal spermatogenic cell-specific region) with PFKM (via C-terminus). Interacts with SMAD5. In terms of tissue distribution, isoform 2: Erythrocyte specific. Isoform 3: Testis-specific. Isoform 4: Testis-specific.

It is found in the mitochondrion outer membrane. Its subcellular location is the cytoplasm. It localises to the cytosol. It carries out the reaction a D-hexose + ATP = a D-hexose 6-phosphate + ADP + H(+). The enzyme catalyses D-fructose + ATP = D-fructose 6-phosphate + ADP + H(+). The catalysed reaction is D-glucose + ATP = D-glucose 6-phosphate + ADP + H(+). It catalyses the reaction D-mannose + ATP = D-mannose 6-phosphate + ADP + H(+). It carries out the reaction D-glucosamine + ATP = D-glucosamine 6-phosphate + ADP + H(+). Its pathway is carbohydrate metabolism; hexose metabolism. It participates in carbohydrate degradation; glycolysis; D-glyceraldehyde 3-phosphate and glycerone phosphate from D-glucose: step 1/4. Its activity is regulated as follows. Hexokinase is an allosteric enzyme inhibited by its product D-glucose 6-phosphate. Hexokinase activity is inhibited by N-acetyl-D-glucosamine. Its function is as follows. Catalyzes the phosphorylation of various hexoses, such as D-glucose, D-glucosamine, D-fructose, D-mannose and 2-deoxy-D-glucose, to hexose 6-phosphate (D-glucose 6-phosphate, D-glucosamine 6-phosphate, D-fructose 6-phosphate, D-mannose 6-phosphate and 2-deoxy-D-glucose 6-phosphate, respectively). Does not phosphorylate N-acetyl-D-glucosamine. Mediates the initial step of glycolysis by catalyzing phosphorylation of D-glucose to D-glucose 6-phosphate. Involved in innate immunity and inflammation by acting as a pattern recognition receptor for bacterial peptidoglycan. When released in the cytosol, N-acetyl-D-glucosamine component of bacterial peptidoglycan inhibits the hexokinase activity of HK1 and causes its dissociation from mitochondrial outer membrane, thereby activating the NLRP3 inflammasome. The sequence is that of Hexokinase-1 from Homo sapiens (Human).